A 291-amino-acid chain; its full sequence is ATP synthase gamma chain (291 aa).

This sequence belongs to the ATPase gamma chain family. F-type ATPases have 2 components, CF(1) - the catalytic core - and CF(0) - the membrane proton channel. CF(1) has five subunits: alpha(3), beta(3), gamma(1), delta(1), epsilon(1). CF(0) has three main subunits: a, b and c.

It is found in the cell inner membrane. Functionally, produces ATP from ADP in the presence of a proton gradient across the membrane. The gamma chain is believed to be important in regulating ATPase activity and the flow of protons through the CF(0) complex. In Burkholderia cenocepacia (strain ATCC BAA-245 / DSM 16553 / LMG 16656 / NCTC 13227 / J2315 / CF5610) (Burkholderia cepacia (strain J2315)), this protein is ATP synthase gamma chain.